Consider the following 702-residue polypeptide: Arylphorin (702 aa).

The signal sequence occupies residues 1 to 16; it reads MQTVLFLAALVSLAAA. N-linked (GlcNAc...) asparagine glycosylation is found at Asn-211 and Asn-481.

This sequence belongs to the hemocyanin family. Hemolymph.

Its subcellular location is the secreted. In terms of biological role, larval storage protein (LSP) which may serve as a store of amino acids for synthesis of adult proteins. Binds the A.niger cell wall component alpha-1,3-glucan, a fungal pathogen-associated molecular pattern (PAMP) that activates the host immune response. The polypeptide is Arylphorin (LOC113516268) (Galleria mellonella (Greater wax moth)).